Here is a 266-residue protein sequence, read N- to C-terminus: Putative carbamate hydrolase RutD (266 aa).

The protein belongs to the AB hydrolase superfamily. Hydrolase RutD family.

It carries out the reaction carbamate + 2 H(+) = NH4(+) + CO2. Functionally, involved in pyrimidine catabolism. May facilitate the hydrolysis of carbamate, a reaction that can also occur spontaneously. The polypeptide is Putative carbamate hydrolase RutD (Escherichia coli O150:H5 (strain SE15)).